A 1380-amino-acid chain; its full sequence is Respiration factor 2 (1380 aa).

C2H2-type zinc fingers lie at residues 151–173 (FLCP…QHSH) and 179–202 (YLCI…QKLH). Residues 208–231 (TGDPRRMTPAPNSTSSFASKRRHS) form a disordered region. 2 positions are modified to phosphoserine: S231 and S322. Disordered stretches follow at residues 413-445 (NLNL…NSNN), 544-584 (SPKN…NIDP), 624-643 (SRSS…SLNH), and 652-688 (LNLS…KRRR). Positions 424-445 (QQQQQQQQQQNSTSSTIVNSNN) are enriched in low complexity. The residue at position 544 (S544) is a Phosphoserine. A compositionally biased stretch (polar residues) spans 544–569 (SPKNPPTTVSDSSSTINFNPGTNNLL). Basic and acidic residues predominate over residues 575–584 (PNDKDSNIDP). The segment covering 624 to 634 (SRSSIPNKSPP) has biased composition (low complexity). S632 carries the phosphoserine modification. Over residues 652–681 (LNLSLNGSTDLPSTPQNQLKEPSYSDPISH) the composition is skewed to polar residues.

This sequence belongs to the RSF2/TDA9 family.

It localises to the nucleus. In terms of biological role, transcription factor that regulates expression of both nuclear and mitochondrial genes, and more specifically those required for glycerol-based growth and respiration. The sequence is that of Respiration factor 2 (RSF2) from Saccharomyces cerevisiae (strain ATCC 204508 / S288c) (Baker's yeast).